A 64-amino-acid polypeptide reads, in one-letter code: Large ribosomal subunit protein uL30 (64 aa).

The protein belongs to the universal ribosomal protein uL30 family. As to quaternary structure, part of the 50S ribosomal subunit.

This is Large ribosomal subunit protein uL30 from Methylorubrum extorquens (strain CM4 / NCIMB 13688) (Methylobacterium extorquens).